A 325-amino-acid polypeptide reads, in one-letter code: Glutarate 2-hydroxylase (325 aa).

Residues H160, D162, and H292 each coordinate Fe cation.

This sequence belongs to the glutarate hydroxylase family. In terms of assembly, homotetramer. Fe(2+) is required as a cofactor.

It catalyses the reaction glutarate + 2-oxoglutarate + O2 = (S)-2-hydroxyglutarate + succinate + CO2. Its pathway is amino-acid degradation. Its function is as follows. Acts as an alpha-ketoglutarate-dependent dioxygenase catalyzing hydroxylation of glutarate (GA) to L-2-hydroxyglutarate (L2HG). Functions in a L-lysine degradation pathway that proceeds via cadaverine, glutarate and L-2-hydroxyglutarate. The sequence is that of Glutarate 2-hydroxylase from Citrobacter koseri (strain ATCC BAA-895 / CDC 4225-83 / SGSC4696).